We begin with the raw amino-acid sequence, 398 residues long: Argininosuccinate synthase (398 aa).

Position 9–17 (9–17 (AYSGGLDTS)) interacts with ATP. L-citrulline contacts are provided by Tyr-87 and Ser-92. Gly-117 is an ATP binding site. L-aspartate is bound by residues Thr-119, Asn-123, and Asp-124. Asn-123 serves as a coordination point for L-citrulline. L-citrulline is bound by residues Arg-127, Ser-176, Ser-185, Glu-261, and Tyr-273.

The protein belongs to the argininosuccinate synthase family. Type 1 subfamily. In terms of assembly, homotetramer.

The protein resides in the cytoplasm. The enzyme catalyses L-citrulline + L-aspartate + ATP = 2-(N(omega)-L-arginino)succinate + AMP + diphosphate + H(+). The protein operates within amino-acid biosynthesis; L-arginine biosynthesis; L-arginine from L-ornithine and carbamoyl phosphate: step 2/3. The sequence is that of Argininosuccinate synthase from Clostridium tetani (strain Massachusetts / E88).